A 406-amino-acid chain; its full sequence is Glycosyltransferase GlyE (406 aa).

Residues 3–265 are GT8 domain; sequence NTKRAVVFAG…SVILNEWFSK (263 aa). Residues 11 to 16 and 106 to 107 contribute to the UDP site; these read AGDYAY and DS. The Mn(2+) site is built by D106, D108, and H227. A UDP-binding site is contributed by 227–233; that stretch reads HYISQDK.

This sequence in the N-terminal section; belongs to the glycosyltransferase 8 family. The cofactor is Mn(2+).

It participates in protein modification; protein glycosylation. In terms of biological role, involved in the polymorphic O-glycosylation of the serine-rich repeat protein PsrP. Catalyzes the third step in glycosylation of PsrP in this bacteria. Transfers galactose from UDP-galactose to the terminal glucose moiety of already-glycosylated PsrP (using the short substrate PsrP-GlcNAc-Glc). Has a very marked preference for PsrP substrate that has already been modified by GlcNAc and glucose. Has hydrolytic activity against UDP-galactose but none against UDP-glucose. Also catalyzes the fourth step in glycosylation of PsrP in this bacteria. Can transfer the sugar from UDP-galactose to the terminal sugar moiety of PsrP-GlcNAc-Glc-Glc and of PsrP-GlcNAc-Glc-Gal. The polypeptide is Glycosyltransferase GlyE (Streptococcus pneumoniae serotype 4 (strain ATCC BAA-334 / TIGR4)).